Consider the following 331-residue polypeptide: MNPIPSWPGRGRVTLVLLAVVPVALAYPWQSTRDYVLLGVAAAVVIGLFGFWRGLYFTTIARRGLAILRRRRRIAEPATCTRTTVLVWVGPPASDTNVLPLTLIARYLDRYGIRADTIRITSRVTASGDCRTWVGLTVVADDNLAALQARSARIPLQETAQVAARRLADHLREIGWEAGTAAPDEIPALVAADSRETWRGMRHTDSDYVAAYRVSANAELPDTLPAIRSRPAQETWIALEIAYAAGSSTRYTVAAACALRTDWRPGGTAPVAGLLPQHGNHVPALTALDPRSTRRLDGHTDAPADLLTRLHWPTPTAGAHRAPLTNAVSRT.

Helical transmembrane passes span 11–31 (GRVT…PWQS) and 37–57 (LLGV…GLYF).

It belongs to the EccE family. In terms of assembly, part of the ESX-3 / type VII secretion system (T7SS), which is composed of cytosolic and membrane components. The ESX-3 membrane complex is composed of EccB3, EccC3, EccD3 and EccE3.

Its subcellular location is the cell inner membrane. Part of the ESX-3 specialized secretion system, which is important for iron and zinc uptake or homeostasis. This Mycobacterium tuberculosis (strain ATCC 25618 / H37Rv) protein is ESX-3 secretion system protein EccE3.